A 448-amino-acid chain; its full sequence is Probable D-serine dehydratase (448 aa).

An N6-(pyridoxal phosphate)lysine modification is found at Lys119.

The protein belongs to the serine/threonine dehydratase family. DsdA subfamily. Requires pyridoxal 5'-phosphate as cofactor.

It catalyses the reaction D-serine = pyruvate + NH4(+). The protein is Probable D-serine dehydratase of Pseudomonas aeruginosa (strain UCBPP-PA14).